The primary structure comprises 456 residues: MGRTREAGCVAAGMVIGAGACYCVYRLTWGKDENEKLWDEEEEEEEEEEEKSCSDKTEKELKTNVGVGARGKPQDDSKSKVEVNVGPENGPGVKKEVHPESQSGGGLEAKAKALFKTLKEQARAKAGRGIRLPNISRNRTLTSSLPCPGGRGGGCHPGRTGSRARNRTSGKVKRKNRSKSNKAPATAWPVRKGKFSFPYKIDDILSAPDLQKVLNILERTNDPFTQEVALVTLGNNAAYSFNQNAIRELGGVPIIAKLIKTRDPIIREKTYNALNNLSVNSENQGKIKTYISQVCDDTMVCRLDSAVQMAGLRLLTNMTVTNHYQHLLSYSFPDFFALLFLGNHFTKIQTMKLIINFTENPAMTRELVSCKVPSELISLFNKEWDREILLNILTLFENINDNIKSEGLASSRKEFSRSSLFFLFKESGVCVKKIKALASHKDLVVKVKVLKVLTKL.

Over 1-6 (MGRTRE) the chain is Mitochondrial intermembrane. Mitochondrion outer membrane (MOM)-targeting sequence regions lie at residues 1-6 (MGRTRE) and 26-36 (RLTWGKDENEK). A helical; Signal-anchor membrane pass occupies residues 7-29 (AGCVAAGMVIGAGACYCVYRLTW). Topologically, residues 30-456 (GKDENEKLWD…VKVLKVLTKL (427 aa)) are cytoplasmic. 2 disordered regions span residues 37–106 (LWDE…SGGG) and 139–186 (RTLT…APAT). A compositionally biased stretch (acidic residues) spans 38–50 (WDEEEEEEEEEEE). Basic and acidic residues-rich tracts occupy residues 51-62 (KSCSDKTEKELK) and 72-81 (KPQDDSKSKV). The segment covering 162–180 (SRARNRTSGKVKRKNRSKS) has biased composition (basic residues). ARM repeat units follow at residues 198–238 (PYKI…NNAA), 240–279 (SFNQ…NLSV), 361–401 (PAMT…NIND), and 418–456 (SSLF…LTKL).

Belongs to the eutherian X-chromosome-specific Armcx family. Interacts with MIRO1. As to expression, widely expressed in the adult nervous tissue, especially in the forebrain, including the cerebral cortex, hippocampus and thalamus.

The protein localises to the mitochondrion. It localises to the mitochondrion outer membrane. Functionally, regulates mitochondrial transport during axon regeneration. Increases the proportion of motile mitochondria by recruiting stationary mitochondria into the motile pool. Enhances mitochondria movement and neurite growth in both adult axons and embryonic neurons. Promotes neuronal survival and axon regeneration after nerve injury. May link mitochondria to the Trak1-kinesin motor complex via its interaction with Miro1. The sequence is that of Armadillo repeat-containing X-linked protein 1 (Armcx1) from Mus musculus (Mouse).